The chain runs to 81 residues: Xenopsin peptides (81 aa).

An N-terminal signal peptide occupies residues 1 to 20 (MYKGIFLCVLLAVICANSLA). Residues 21–37 (TPSSDADEDNDEVERYV) constitute a propeptide that is removed on maturation. A propeptide spans 65–73 (EAMLRSAEA) (removed in mature form by a dipeptidylpeptidase).

Belongs to the gastrin/cholecystokinin family. Magainin subfamily. As to expression, XPF is synthesized in the stomach and stored in a novel granular multinucleated cell in the gastric mucosa, it is stored as active, processed peptides in large granules within the granular gland secretions of the skin.

Its subcellular location is the secreted. Functionally, xenopsin is a neurotensin-like octapeptide. Its function is as follows. XPF has antimicrobial activity. This chain is Xenopsin peptides, found in Xenopus laevis (African clawed frog).